Here is a 207-residue protein sequence, read N- to C-terminus: Ribosomal RNA large subunit methyltransferase E (207 aa).

The disordered stretch occupies residues 1-20; sequence MKRDPTKGRKTPDHYARKAK. 5 residues coordinate S-adenosyl-L-methionine: glycine 56, tryptophan 58, aspartate 76, aspartate 94, and aspartate 116. The active-site Proton acceptor is the lysine 156.

It belongs to the class I-like SAM-binding methyltransferase superfamily. RNA methyltransferase RlmE family.

It is found in the cytoplasm. The enzyme catalyses uridine(2552) in 23S rRNA + S-adenosyl-L-methionine = 2'-O-methyluridine(2552) in 23S rRNA + S-adenosyl-L-homocysteine + H(+). Functionally, specifically methylates the uridine in position 2552 of 23S rRNA at the 2'-O position of the ribose in the fully assembled 50S ribosomal subunit. In Desulfosudis oleivorans (strain DSM 6200 / JCM 39069 / Hxd3) (Desulfococcus oleovorans), this protein is Ribosomal RNA large subunit methyltransferase E.